The sequence spans 298 residues: uncharacterized protein (298 aa).

Its subcellular location is the cytoplasm. It is found in the nucleus. This is an uncharacterized protein from Schizosaccharomyces pombe (strain 972 / ATCC 24843) (Fission yeast).